A 426-amino-acid polypeptide reads, in one-letter code: Isovaleryl-CoA dehydrogenase, mitochondrial (426 aa).

A mitochondrion-targeting transit peptide spans 1–32 (MATAAWLLGRRVASWRMRPPLQSLAGLITQRT). 2 positions are modified to N6-acetyllysine; alternate: Lys-58 and Lys-78. Lys-58 and Lys-78 each carry N6-succinyllysine; alternate. FAD contacts are provided by residues 165-174 (LAMSEPNAGS) and 198-200 (WIT). Ser-174 provides a ligand contact to substrate. 222 to 223 (SR) contacts substrate. Lys-241 is modified (N6-acetyllysine). Residues Tyr-277 and 284–287 (DLER) each bind substrate. Glu-286 (proton acceptor) is an active-site residue. Arg-312 is a binding site for FAD. The residue at position 318 (Lys-318) is an N6-succinyllysine. FAD is bound by residues Gln-323 and 380–384 (QCLGG). 407-408 (AG) contributes to the substrate binding site. 409–411 (TSE) serves as a coordination point for FAD.

It belongs to the acyl-CoA dehydrogenase family. Homotetramer. FAD serves as cofactor.

The protein localises to the mitochondrion matrix. The catalysed reaction is 3-methylbutanoyl-CoA + oxidized [electron-transfer flavoprotein] + H(+) = 3-methylbut-2-enoyl-CoA + reduced [electron-transfer flavoprotein]. It catalyses the reaction pentanoyl-CoA + oxidized [electron-transfer flavoprotein] + H(+) = (2E)-pentenoyl-CoA + reduced [electron-transfer flavoprotein]. The enzyme catalyses hexanoyl-CoA + oxidized [electron-transfer flavoprotein] + H(+) = (2E)-hexenoyl-CoA + reduced [electron-transfer flavoprotein]. It carries out the reaction butanoyl-CoA + oxidized [electron-transfer flavoprotein] + H(+) = (2E)-butenoyl-CoA + reduced [electron-transfer flavoprotein]. Its pathway is amino-acid degradation; L-leucine degradation; (S)-3-hydroxy-3-methylglutaryl-CoA from 3-isovaleryl-CoA: step 1/3. Its function is as follows. Catalyzes the conversion of isovaleryl-CoA/3-methylbutanoyl-CoA to 3-methylbut-2-enoyl-CoA as an intermediate step in the leucine (Leu) catabolic pathway. To a lesser extent, is also able to catalyze the oxidation of other saturated short-chain acyl-CoA thioesters as pentanoyl-CoA, hexenoyl-CoA and butenoyl-CoA. The chain is Isovaleryl-CoA dehydrogenase, mitochondrial (IVD) from Bos taurus (Bovine).